A 391-amino-acid chain; its full sequence is MSLNPRDVVIVDFGRTPMGRSKGGMHRNTRAEDMSAHLISKVLERNSKVDPGEVEDVIWGCVNQTLEQGWNIARMASLMTQIPHTSAAQTVSRLCGSSMSALHTAAQAIMTGNGDVFVVGGVEHMGHVSMMHGVDPNPHMSLYAAKASGMMGLTAEMLGKMHGISREQQDAFAVRSHQLAHKATVEGKFKDEIIPMQGYDENGFLKIFDYDETIRPDTTLESLAALKPAFNPKGGTVTAGTSSQITDGASCMIVMSAQRAKDLGLEPLAVIRSMAVAGVDPAIMGYGPVPATQKALKRAGLNMADIDFIELNEAFAAQALPVLKDLKVLDKMNEKVNLHGGAIALGHPFGCSGARISGTLLNVMKQNGGTFGLSTMCIGLGQGIATVFERV.

The Acyl-thioester intermediate role is filled by cysteine 95. Residues histidine 347 and cysteine 377 each act as proton acceptor in the active site.

Belongs to the thiolase-like superfamily. Thiolase family. In terms of assembly, heterotetramer of two alpha chains (FadB) and two beta chains (FadA).

It is found in the cytoplasm. It catalyses the reaction an acyl-CoA + acetyl-CoA = a 3-oxoacyl-CoA + CoA. It participates in lipid metabolism; fatty acid beta-oxidation. In terms of biological role, catalyzes the final step of fatty acid oxidation in which acetyl-CoA is released and the CoA ester of a fatty acid two carbons shorter is formed. The sequence is that of 3-ketoacyl-CoA thiolase from Pseudomonas fragi.